The sequence spans 210 residues: 3-hexulose-6-phosphate synthase (210 aa).

It belongs to the HPS/KGPDC family. HPS subfamily.

It catalyses the reaction D-ribulose 5-phosphate + formaldehyde = D-arabino-hex-3-ulose 6-phosphate. The protein operates within one-carbon metabolism; formaldehyde assimilation via RuMP pathway; D-fructose 6-phosphate from D-ribulose 5-phosphate and formaldehyde: step 1/2. Catalyzes the condensation of ribulose 5-phosphate with formaldehyde to form 3-hexulose 6-phosphate. The chain is 3-hexulose-6-phosphate synthase from Staphylococcus aureus (strain NCTC 8325 / PS 47).